The primary structure comprises 117 residues: Large ribosomal subunit protein uL24 (117 aa).

Residues 1–12 (MSKKNSQTSPQR) are compositionally biased toward polar residues. The segment at 1–20 (MSKKNSQTSPQRQKMHVKKG) is disordered.

Belongs to the universal ribosomal protein uL24 family. In terms of assembly, part of the 50S ribosomal subunit.

In terms of biological role, one of two assembly initiator proteins, it binds directly to the 5'-end of the 23S rRNA, where it nucleates assembly of the 50S subunit. Functionally, one of the proteins that surrounds the polypeptide exit tunnel on the outside of the subunit. The sequence is that of Large ribosomal subunit protein uL24 from Microcystis aeruginosa (strain NIES-843 / IAM M-2473).